Consider the following 69-residue polypeptide: Cytochrome c oxidase subunit 8A, mitochondrial (69 aa).

A mitochondrion-targeting transit peptide spans 1–25 (MSVLTPLLLRGLTGSARRLPVPCAR). The short motif at 2–19 (SVLTPLLLRGLTGSARRL) is the SIFI-degron element. Over 26–36 (VHSKPPREQLG) the chain is Mitochondrial matrix. A helical membrane pass occupies residues 37–60 (TMDIAIGLTSCFVCFLLPSGWVLS). Over 61-69 (HLENYKKRE) the chain is Mitochondrial intermembrane.

This sequence belongs to the cytochrome c oxidase VIII family. In terms of assembly, component of the cytochrome c oxidase (complex IV, CIV), a multisubunit enzyme composed of 14 subunits. The complex is composed of a catalytic core of 3 subunits MT-CO1, MT-CO2 and MT-CO3, encoded in the mitochondrial DNA, and 11 supernumerary subunits COX4I, COX5A, COX5B, COX6A, COX6B, COX6C, COX7A, COX7B, COX7C, COX8 and NDUFA4, which are encoded in the nuclear genome. The complex exists as a monomer or a dimer and forms supercomplexes (SCs) in the inner mitochondrial membrane with NADH-ubiquinone oxidoreductase (complex I, CI) and ubiquinol-cytochrome c oxidoreductase (cytochrome b-c1 complex, complex III, CIII), resulting in different assemblies (supercomplex SCI(1)III(2)IV(1) and megacomplex MCI(2)III(2)IV(2)). In response to mitochondrial stress, the precursor protein is ubiquitinated by the SIFI complex in the cytoplasm before mitochondrial import, leading to its degradation. Within the SIFI complex, UBR4 initiates ubiquitin chain that are further elongated or branched by KCMF1.

The protein resides in the mitochondrion inner membrane. It functions in the pathway energy metabolism; oxidative phosphorylation. In terms of biological role, component of the cytochrome c oxidase, the last enzyme in the mitochondrial electron transport chain which drives oxidative phosphorylation. The respiratory chain contains 3 multisubunit complexes succinate dehydrogenase (complex II, CII), ubiquinol-cytochrome c oxidoreductase (cytochrome b-c1 complex, complex III, CIII) and cytochrome c oxidase (complex IV, CIV), that cooperate to transfer electrons derived from NADH and succinate to molecular oxygen, creating an electrochemical gradient over the inner membrane that drives transmembrane transport and the ATP synthase. Cytochrome c oxidase is the component of the respiratory chain that catalyzes the reduction of oxygen to water. Electrons originating from reduced cytochrome c in the intermembrane space (IMS) are transferred via the dinuclear copper A center (CU(A)) of subunit 2 and heme A of subunit 1 to the active site in subunit 1, a binuclear center (BNC) formed by heme A3 and copper B (CU(B)). The BNC reduces molecular oxygen to 2 water molecules using 4 electrons from cytochrome c in the IMS and 4 protons from the mitochondrial matrix. In Otolemur crassicaudatus (Brown greater galago), this protein is Cytochrome c oxidase subunit 8A, mitochondrial (COX8A).